The following is an 821-amino-acid chain: MNGHMSNRSSGYGVYPSQLNGYGSSPPYSQMDREHSSRTSAKALYEQRKNYARDSVSSVSDVSQYRVEHLTTFVLDRKDAMITVEDGIRKLKLLDAKGKVWTQDMILQVDDRAVSLIDLESKNELENFPLNTISHCQAVVHACSYDSILALVCKEPTQSKPDLHLFQCDEVKANLISEDIESAISDSKGGKQKRRPEALRMIAKADPGIPPPPRAPAPVPPGTVTQVDVRSRVAAWSAWAADQGDFEKPRQYHEQEETPEMMAARIDRDVQILNHILDDIEFFITKLQKAAEAFSELSKRKKSKKSKRKGPGEGVLTLRAKPPPPDEFVDCFQKFKHGFNLLAKLKSHIQNPSASDLVHFLFTPLNMVVQATGGPELASSVLSPLLTKDTVDFLNYTATAEERKLWMSLGDSWVKVRAEWPKEQFIPPYVPRFRNGWEPPMLNFMGAPTEQDMYQLAESVANAEHQRKQDSKRLSTEHSNVSDYPPADGYAYSSSMYHRGPHADHGEAAMPFKSTPNHQVDRNYDAVKTQPKKYAKSKYDFVARNSSELSVMKDDVLEILDDRRQWWKVRNASGDSGFVPNNILDIMRTPESGVGRADPPYTHTIQKQRTEYGLRSADTPSAPSPPPTPAPVPVPLPPSVPAPVSVPKVPANVTRQNSSSSDSGGSIVRDSQRYKQLPVDRRKSQMEEVQDELFQRLTIGRSAAQRKFHVPRQNVPVINITYDSSPEEVKTWLQSKGFNPVTVNSLGVLNGAQLFSLNKDELRSVCPEGARVFNQITVQKAALEDSNGSSELQEIMRRRQEKISAAASDSGVESFDEGSSH.

Composition is skewed to polar residues over residues 1 to 10 (MNGHMSNRSS) and 17 to 28 (SQLNGYGSSPPY). The disordered stretch occupies residues 1–39 (MNGHMSNRSSGYGVYPSQLNGYGSSPPYSQMDREHSSRT). S58 carries the phosphoserine modification. In terms of domain architecture, PTB spans 64–194 (QYRVEHLTTF…SDSKGGKQKR (131 aa)). Disordered regions lie at residues 204–224 (KADP…PGTV), 295–320 (SELS…TLRA), and 461–525 (ANAE…RNYD). Residues 208–221 (GIPPPPRAPAPVPP) show a composition bias toward pro residues. Position 223 is a phosphothreonine (T223). Residues 299-309 (KRKKSKKSKRK) are compositionally biased toward basic residues. T317 carries the phosphothreonine modification. Basic and acidic residues predominate over residues 464-476 (EHQRKQDSKRLST). Residue S475 is modified to Phosphoserine. In terms of domain architecture, SH3 spans 530–589 (QPKKYAKSKYDFVARNSSELSVMKDDVLEILDDRRQWWKVRNASGDSGFVPNNILDIMRT). A disordered region spans residues 610–683 (TEYGLRSADT…YKQLPVDRRK (74 aa)). A compositionally biased stretch (pro residues) spans 622 to 641 (APSPPPTPAPVPVPLPPSVP). The residue at position 624 (S624) is a Phosphoserine; by MAPK. Position 628 is a phosphothreonine; by MAPK (T628). Low complexity predominate over residues 642–651 (APVSVPKVPA). The effector region stretch occupies residues 648–821 (KVPANVTRQN…VESFDEGSSH (174 aa)). Residues S658 and S661 each carry the phosphoserine modification. The segment covering 670–683 (DSQRYKQLPVDRRK) has biased composition (basic and acidic residues). Residues 679-697 (VDRRKSQMEEVQDELFQRL) are amphipathic helix. S684 is subject to Phosphoserine. Helix bundle stretches follow at residues 717–737 (VINI…QSKG), 751–756 (GAQLFS), 761–766 (ELRSVC), and 765–784 (VCPE…AALE). Residues 800-821 (QEKISAAASDSGVESFDEGSSH) are disordered. Phosphoserine occurs at positions 810 and 814.

Belongs to the EPS8 family. As to quaternary structure, homodimer. Part of a complex consisting of ABI1, EPS8 and SOS1. Interacts with BAIAP2. Interacts with SHB and LANCL1. Interacts with EGFR; mediates EPS8 phosphorylation. Interacts with MYO15A and WHRN. Post-translationally, ubiquitinated by the SCF(FBXW5) E3 ubiquitin-protein ligase complex during G2 phase, leading to its transient degradation and subsequent cell shape changes required to allow mitotic progression. Reappears at the midzone of dividing cells. In terms of processing, phosphorylation at Ser-624 and Thr-628 by MAPK following BDNF treatment promotes removal from actin and filopodia formation. Phosphorylated by several receptor tyrosine kinases. As to expression, expressed in neuronal cell body and neurites, and prominently enriched in the axonal growth cone. Expressed at the tips of cochlear hair cells stereocilia.

Its subcellular location is the cytoplasm. The protein resides in the cell cortex. It is found in the cell projection. It localises to the ruffle membrane. The protein localises to the growth cone. Its subcellular location is the stereocilium. The protein resides in the synapse. It is found in the synaptosome. Signaling adapter that controls various cellular protrusions by regulating actin cytoskeleton dynamics and architecture. Depending on its association with other signal transducers, can regulate different processes. Together with SOS1 and ABI1, forms a trimeric complex that participates in transduction of signals from Ras to Rac by activating the Rac-specific guanine nucleotide exchange factor (GEF) activity. Acts as a direct regulator of actin dynamics by binding actin filaments and has both barbed-end actin filament capping and actin bundling activities depending on the context. Displays barbed-end actin capping activity when associated with ABI1, thereby regulating actin-based motility process: capping activity is auto-inhibited and inhibition is relieved upon ABI1 interaction. Also shows actin bundling activity when associated with BAIAP2, enhancing BAIAP2-dependent membrane extensions and promoting filopodial protrusions. Involved in the regulation of processes such as axonal filopodia growth, stereocilia length, dendritic cell migration and cancer cell migration and invasion. Acts as a regulator of axonal filopodia formation in neurons: in the absence of neurotrophic factors, negatively regulates axonal filopodia formation via actin-capping activity. In contrast, it is phosphorylated in the presence of BDNF leading to inhibition of its actin-capping activity and stimulation of filopodia formation. Component of a complex with WHRN and MYO15A that localizes at stereocilia tips and is required for elongation of the stereocilia actin core. Indirectly involved in cell cycle progression; its degradation following ubiquitination being required during G2 phase to promote cell shape changes. The protein is Epidermal growth factor receptor kinase substrate 8 (Eps8) of Mus musculus (Mouse).